We begin with the raw amino-acid sequence, 209 residues long: J domain-containing protein spf31 (209 aa).

A J domain is found at 31–96 (NAYDVLDILP…KIRESLDSAY (66 aa)). Disordered stretches follow at residues 149–175 (ANQQ…EKVW) and 187–209 (QDFL…RVLG). The segment covering 154-175 (EQARQDEIARERKRRVESEKVW) has biased composition (basic and acidic residues). The span at 192-209 (KTKKNNLKKKNKKPRVLG) shows a compositional bias: basic residues.

The chain is J domain-containing protein spf31 (spf31) from Schizosaccharomyces pombe (strain 972 / ATCC 24843) (Fission yeast).